The sequence spans 801 residues: Quinoprotein glucose dehydrogenase A (801 aa).

The signal sequence occupies residues 1 to 33 (MNQPTSRSGLTTFTVIIIGLLALFLLIGGIWLA). Helical transmembrane passes span 39–55 (IYYI…AWQL), 59–79 (ASTA…WSVW), 94–108 (ILGI…PAVT), and 119–138 (VALS…SIFN). The Proton acceptor role is filled by D471.

This sequence belongs to the bacterial PQQ dehydrogenase family. In terms of assembly, monomer. Pyrroloquinoline quinone is required as a cofactor.

It is found in the cell inner membrane. The enzyme catalyses D-glucose + A = D-glucono-1,5-lactone + AH2. Its function is as follows. Catalyzes an exceptionally high rate of oxidation of a wide range of aldose sugars, including D-glucose, galactose, arabinose and xylose, and also the disaccharides lactose, cellobiose and maltose. The protein is Quinoprotein glucose dehydrogenase A (gdhA) of Acinetobacter calcoaceticus.